A 237-amino-acid chain; its full sequence is MARKPTPPGTQQPTSVGHILDLVRGAVPPLHPAGLPFVLAPLGVAVLGRKRKWVRRGALTSAAACAAFFRHPHRVPPNRVGVVVAPADGEVALVDSAVPPAELDMGTEPLPRVSIFLSVLDVHVQRSPVGGEVTKVVHRPGQFLSADLADASEVNERNSMLLHTPEGHDVAVVQIAGLLARRIVCDAKVGDTLPIGDTYGLIRFGSRVDTYFPAGTTLLAERGQRTIGAETVIAQLP.

S206 (schiff-base intermediate with substrate; via pyruvic acid) is an active-site residue. A Pyruvic acid (Ser); by autocatalysis modification is found at S206.

This sequence belongs to the phosphatidylserine decarboxylase family. PSD-A subfamily. As to quaternary structure, heterodimer of a large membrane-associated beta subunit and a small pyruvoyl-containing alpha subunit. Requires pyruvate as cofactor. Post-translationally, is synthesized initially as an inactive proenzyme. Formation of the active enzyme involves a self-maturation process in which the active site pyruvoyl group is generated from an internal serine residue via an autocatalytic post-translational modification. Two non-identical subunits are generated from the proenzyme in this reaction, and the pyruvate is formed at the N-terminus of the alpha chain, which is derived from the carboxyl end of the proenzyme. The post-translation cleavage follows an unusual pathway, termed non-hydrolytic serinolysis, in which the side chain hydroxyl group of the serine supplies its oxygen atom to form the C-terminus of the beta chain, while the remainder of the serine residue undergoes an oxidative deamination to produce ammonia and the pyruvoyl prosthetic group on the alpha chain.

It is found in the cell membrane. It carries out the reaction a 1,2-diacyl-sn-glycero-3-phospho-L-serine + H(+) = a 1,2-diacyl-sn-glycero-3-phosphoethanolamine + CO2. It functions in the pathway phospholipid metabolism; phosphatidylethanolamine biosynthesis; phosphatidylethanolamine from CDP-diacylglycerol: step 2/2. Functionally, catalyzes the formation of phosphatidylethanolamine (PtdEtn) from phosphatidylserine (PtdSer). The chain is Phosphatidylserine decarboxylase proenzyme from Rhodococcus jostii (strain RHA1).